The sequence spans 145 residues: LIRP (145 aa).

The or 22 signal peptide spans 1-19; that stretch reads MWKLCLRLLAVLAVCLSTA. 2 consecutive propeptides follow at residues 20–33 and 117–122; these read TQAQ…SPKR and FRRRTR. 3 disulfide bridges follow: cysteine 44-cysteine 129, cysteine 56-cysteine 142, and cysteine 128-cysteine 133.

This sequence belongs to the insulin family. As to quaternary structure, heterodimer of a B chain and an A chain linked by two disulfide bonds.

The protein localises to the secreted. This chain is LIRP, found in Locusta migratoria (Migratory locust).